Here is a 568-residue protein sequence, read N- to C-terminus: PTS system lactose-specific EIICB component (568 aa).

Residues leucine 7–phenylalanine 409 form the PTS EIIC type-3 domain. 9 consecutive transmembrane segments (helical) span residues glycine 30–valine 50, isoleucine 62–glycine 82, isoleucine 103–proline 123, glycine 128–valine 148, phenylalanine 183–valine 203, glycine 222–histidine 242, phenylalanine 283–isoleucine 303, isoleucine 339–valine 359, and valine 389–phenylalanine 409. The PTS EIIB type-3 domain occupies glutamate 466–aspartate 568. Cysteine 473 (phosphocysteine intermediate; for EIIB activity) is an active-site residue. Position 473 is a phosphocysteine; by EIIA (cysteine 473).

It is found in the cell membrane. The catalysed reaction is lactose(out) + N(pros)-phospho-L-histidyl-[protein] = lactose 6-phosphate(in) + L-histidyl-[protein]. The phosphoenolpyruvate-dependent sugar phosphotransferase system (sugar PTS), a major carbohydrate active transport system, catalyzes the phosphorylation of incoming sugar substrates concomitantly with their translocation across the cell membrane. The enzyme II LacEF PTS system is involved in lactose transport. In Lactococcus lactis subsp. lactis (Streptococcus lactis), this protein is PTS system lactose-specific EIICB component.